The following is a 230-amino-acid chain: MGRSYGGRVLAAMTLLGIPAAVLVALAAQLLFQLQAGRAELRRVRTDGLHPELDPDAGLPEAAAGALLPLATALAALAQVLGLSCLLLAALCGHLGAELARGPGPGRSDWFLYDCRLLRHSALGLFCCGVSVYLAALAIYALLLFEIEAGAAAASILGSGALILVAIMTHTLFRAVQATRRGLRELSPPSFEDEPARPSEDSKSGCRAQPPQDEETETPIGAVTHQGSHF.

The next 4 membrane-spanning stretches (helical) occupy residues 12 to 32 (AMTLLGIPAAVLVALAAQLLF), 73 to 93 (ALAALAQVLGLSCLLLAALCG), 125 to 145 (LFCCGVSVYLAALAIYALLLF), and 147 to 167 (IEAGAAAASILGSGALILVAI). Residues 184–230 (RELSPPSFEDEPARPSEDSKSGCRAQPPQDEETETPIGAVTHQGSHF) form a disordered region. The segment covering 194-204 (EPARPSEDSKS) has biased composition (basic and acidic residues).

It localises to the membrane. This chain is Transmembrane protein 221 (Tmem221), found in Mus musculus (Mouse).